Here is a 149-residue protein sequence, read N- to C-terminus: Nucleoside diphosphate kinase (149 aa).

6 residues coordinate ATP: Lys9, Phe57, Arg85, Thr91, Arg102, and Asn112. His115 (pros-phosphohistidine intermediate) is an active-site residue.

Belongs to the NDK family. In terms of assembly, homotetramer. Mg(2+) is required as a cofactor.

The protein resides in the cytoplasm. It catalyses the reaction a 2'-deoxyribonucleoside 5'-diphosphate + ATP = a 2'-deoxyribonucleoside 5'-triphosphate + ADP. The catalysed reaction is a ribonucleoside 5'-diphosphate + ATP = a ribonucleoside 5'-triphosphate + ADP. In terms of biological role, major role in the synthesis of nucleoside triphosphates other than ATP. The ATP gamma phosphate is transferred to the NDP beta phosphate via a ping-pong mechanism, using a phosphorylated active-site intermediate. The protein is Nucleoside diphosphate kinase of Nostoc sp. (strain PCC 7120 / SAG 25.82 / UTEX 2576).